The sequence spans 509 residues: Maturase K (509 aa).

Belongs to the intron maturase 2 family. MatK subfamily.

The protein localises to the plastid. It is found in the chloroplast. Functionally, usually encoded in the trnK tRNA gene intron. Probably assists in splicing its own and other chloroplast group II introns. In Nicotiana acuminata (Acuminate tobacco), this protein is Maturase K.